The chain runs to 213 residues: Uridine kinase (213 aa).

Position 15–22 (15–22) interacts with ATP; it reads GASASGKS.

It belongs to the uridine kinase family.

It is found in the cytoplasm. The catalysed reaction is uridine + ATP = UMP + ADP + H(+). The enzyme catalyses cytidine + ATP = CMP + ADP + H(+). The protein operates within pyrimidine metabolism; CTP biosynthesis via salvage pathway; CTP from cytidine: step 1/3. It functions in the pathway pyrimidine metabolism; UMP biosynthesis via salvage pathway; UMP from uridine: step 1/1. The polypeptide is Uridine kinase (Pectobacterium carotovorum subsp. carotovorum (strain PC1)).